The sequence spans 196 residues: MSLALTNLLRQARTGLLLLLVATAGLGLVYPLAVFAVGRLVPARADGQVVAVDGQPVGSRLIGQEFPGEQWFQPRPSAAGDGYDPTASGASNLGPESTDLLKAVEERRAAVAAADGTAPVDVAPDALTASGSGLDPHVSPENARRQVARVAAARGLSEQRVAALVAEHTRGRALGFLGEPTVNVLELNLALRSAAP.

Residues 17–37 (LLLLVATAGLGLVYPLAVFAV) form a helical membrane-spanning segment. The tract at residues 73-93 (QPRPSAAGDGYDPTASGASNL) is disordered.

It belongs to the KdpC family. In terms of assembly, the system is composed of three essential subunits: KdpA, KdpB and KdpC.

The protein localises to the cell membrane. Functionally, part of the high-affinity ATP-driven potassium transport (or Kdp) system, which catalyzes the hydrolysis of ATP coupled with the electrogenic transport of potassium into the cytoplasm. This subunit acts as a catalytic chaperone that increases the ATP-binding affinity of the ATP-hydrolyzing subunit KdpB by the formation of a transient KdpB/KdpC/ATP ternary complex. In Kineococcus radiotolerans (strain ATCC BAA-149 / DSM 14245 / SRS30216), this protein is Potassium-transporting ATPase KdpC subunit.